Here is a 378-residue protein sequence, read N- to C-terminus: Cytochrome b (378 aa).

4 helical membrane-spanning segments follow: residues 33–53, 77–98, 113–133, and 178–198; these read FGSL…FLAM, WLIR…YLHI, WNTG…GYVL, and FFAF…LHFL. Residues H83 and H97 each contribute to the heme b site. The heme b site is built by H182 and H196. Residue H201 coordinates a ubiquinone. The next 4 helical transmembrane spans lie at 226–246, 288–308, 320–340, and 347–367; these read YKDL…AVFS, LGGV…PFLH, WSQL…WIGG, and LTTV…FLMP.

The protein belongs to the cytochrome b family. In terms of assembly, the cytochrome bc1 complex contains 3 respiratory subunits (MT-CYB, CYC1 and UQCRFS1), 2 core proteins (UQCRC1 and UQCRC2) and probably 6 low-molecular weight proteins. Heme b is required as a cofactor.

It is found in the mitochondrion inner membrane. In terms of biological role, component of the ubiquinol-cytochrome c reductase complex (complex III or cytochrome b-c1 complex) that is part of the mitochondrial respiratory chain. The b-c1 complex mediates electron transfer from ubiquinol to cytochrome c. Contributes to the generation of a proton gradient across the mitochondrial membrane that is then used for ATP synthesis. In Indostomus paradoxus (Armoured stickleback), this protein is Cytochrome b (mt-cyb).